A 262-amino-acid polypeptide reads, in one-letter code: Acyl-[acyl-carrier-protein]--UDP-N-acetylglucosamine O-acyltransferase (262 aa).

This sequence belongs to the transferase hexapeptide repeat family. LpxA subfamily. In terms of assembly, homotrimer.

The protein localises to the cytoplasm. The enzyme catalyses a (3R)-hydroxyacyl-[ACP] + UDP-N-acetyl-alpha-D-glucosamine = a UDP-3-O-[(3R)-3-hydroxyacyl]-N-acetyl-alpha-D-glucosamine + holo-[ACP]. It functions in the pathway glycolipid biosynthesis; lipid IV(A) biosynthesis; lipid IV(A) from (3R)-3-hydroxytetradecanoyl-[acyl-carrier-protein] and UDP-N-acetyl-alpha-D-glucosamine: step 1/6. Functionally, involved in the biosynthesis of lipid A, a phosphorylated glycolipid that anchors the lipopolysaccharide to the outer membrane of the cell. The polypeptide is Acyl-[acyl-carrier-protein]--UDP-N-acetylglucosamine O-acyltransferase (Aliivibrio fischeri (strain ATCC 700601 / ES114) (Vibrio fischeri)).